The primary structure comprises 431 residues: Ribosomal protein uS12 methylthiotransferase RimO (431 aa).

The 117-residue stretch at 4–120 (LKLYVIVLGC…LAESINKTKK (117 aa)) folds into the MTTase N-terminal domain. Positions 13, 49, 83, 150, 154, and 157 each coordinate [4Fe-4S] cluster. The Radical SAM core domain maps to 136–365 (DSDLPYAYVK…MEVQAEISFL (230 aa)). One can recognise a TRAM domain in the interval 368–431 (QRLVGKVIDV…TYDLEGELVE (64 aa)).

The protein belongs to the methylthiotransferase family. RimO subfamily. [4Fe-4S] cluster is required as a cofactor.

The protein localises to the cytoplasm. It carries out the reaction L-aspartate(89)-[ribosomal protein uS12]-hydrogen + (sulfur carrier)-SH + AH2 + 2 S-adenosyl-L-methionine = 3-methylsulfanyl-L-aspartate(89)-[ribosomal protein uS12]-hydrogen + (sulfur carrier)-H + 5'-deoxyadenosine + L-methionine + A + S-adenosyl-L-homocysteine + 2 H(+). Catalyzes the methylthiolation of an aspartic acid residue of ribosomal protein uS12. The sequence is that of Ribosomal protein uS12 methylthiotransferase RimO from Fervidobacterium nodosum (strain ATCC 35602 / DSM 5306 / Rt17-B1).